Reading from the N-terminus, the 315-residue chain is Homoserine kinase (315 aa).

Position 97-107 (97-107) interacts with ATP; the sequence is PPARGLGSSAT.

This sequence belongs to the GHMP kinase family. Homoserine kinase subfamily.

The protein resides in the cytoplasm. The catalysed reaction is L-homoserine + ATP = O-phospho-L-homoserine + ADP + H(+). Its pathway is amino-acid biosynthesis; L-threonine biosynthesis; L-threonine from L-aspartate: step 4/5. Its function is as follows. Catalyzes the ATP-dependent phosphorylation of L-homoserine to L-homoserine phosphate. In Synechococcus sp. (strain CC9311), this protein is Homoserine kinase.